Reading from the N-terminus, the 91-residue chain is MNGLVIIDMNNFAIVYANITFLFYYLLDFTLPFHVCRFLFHSSLENGPQHGQQGAATISRRAHCEKSHPSYYCTQKNMEANRQCYVNGTKT.

Residues 12–34 (FAIVYANITFLFYYLLDFTLPFH) form a helical membrane-spanning segment.

Its subcellular location is the membrane. This is an uncharacterized protein from Saccharomyces cerevisiae (strain ATCC 204508 / S288c) (Baker's yeast).